The primary structure comprises 173 residues: Crossover junction endodeoxyribonuclease RuvC (173 aa).

Residues aspartate 8, glutamate 67, and aspartate 139 contribute to the active site. 3 residues coordinate Mg(2+): aspartate 8, glutamate 67, and aspartate 139.

This sequence belongs to the RuvC family. As to quaternary structure, homodimer which binds Holliday junction (HJ) DNA. The HJ becomes 2-fold symmetrical on binding to RuvC with unstacked arms; it has a different conformation from HJ DNA in complex with RuvA. In the full resolvosome a probable DNA-RuvA(4)-RuvB(12)-RuvC(2) complex forms which resolves the HJ. Requires Mg(2+) as cofactor.

Its subcellular location is the cytoplasm. The catalysed reaction is Endonucleolytic cleavage at a junction such as a reciprocal single-stranded crossover between two homologous DNA duplexes (Holliday junction).. In terms of biological role, the RuvA-RuvB-RuvC complex processes Holliday junction (HJ) DNA during genetic recombination and DNA repair. Endonuclease that resolves HJ intermediates. Cleaves cruciform DNA by making single-stranded nicks across the HJ at symmetrical positions within the homologous arms, yielding a 5'-phosphate and a 3'-hydroxyl group; requires a central core of homology in the junction. The consensus cleavage sequence is 5'-(A/T)TT(C/G)-3'. Cleavage occurs on the 3'-side of the TT dinucleotide at the point of strand exchange. HJ branch migration catalyzed by RuvA-RuvB allows RuvC to scan DNA until it finds its consensus sequence, where it cleaves and resolves the cruciform DNA. The polypeptide is Crossover junction endodeoxyribonuclease RuvC (Aeromonas salmonicida (strain A449)).